Consider the following 944-residue polypeptide: MSDYKSTLNLPETGFPMRGDLAKREPGMLARWTDDDLYGIIRAAKKGKKTFILHDGPPYANGSIHIGHSVNKILKDIIVKSKGLSGFDSPYVPGWDCHGLPIELKVEQEFGKPGEKFTAAEFRAKCREYAATQVDGQRKDFIRLGVLGDWSHPYLTMDFKTEANIIRALGRIIKNGHLHKGAKPVHWCVDCRSALAEAEVEYYDKTSPSIDVAFRAVDQDAVKAKFGLPGVSGPVSLVIWTTTPWTLPANRAISLAPDFDYALVQIDGQAVILAKDLVESVMQRIGAAEYTILGTVKGAELELLRFTHPFMGFDVPAILGDHVTLDAGTGAVHTAPGHGPDDYVIGQKYGLETANPVGPDGAYLPGTYPTLDGVNVFKANDIVIELLKEKGALLHVEKMQHSYPCCWRHKTPIIFRATPQWFVSMDKEGLRQQSLKEIKGVQWIPDWGQARIESMVANRPDWCISRQRTWGVPMSLFVHKETQELLPIERTLAAMEEVAKRVEVDGIQAWWDLDPKEILGEDADQYEKVPDTLDVWFDSGSTSYSVVDARPEFAGHAADMYLEGSDQHRGWFMSSLMISVAMKGKAPYRQVLTHGFTVDGQGRKMSKSIGNTVSPQDVMNKLGADILRLWVASTDYTGEMAVSDEILKRAADSYRRIRNTARFLLANLNGFNPATDMVKPEEMVVLDRWAVGCAKTAQQEILKAYEAYDFHEVVQRLMRFCSVEMGSFYLDIIKDRQYTAKADSVARRSCQTALYHIAEALVRWMAPIMSFTADEIWGYLPGEREKYVFTGEWYDGLFGLEENEEFNDAFWDDVRYIKDQVNKELENQKANGIKSNLEAKVTLKYADDANGTIKKLKLLGEEVRFIFITSQFVISEQAGGIDDENIQYNAGNTTVQAVVTRAEGDKCPRCWHYTTDVGKVAEHADICGRCVSNIAGNGEQRKFA.

The 'HIGH' region signature appears at 58-68 (PYANGSIHIGH). Glutamate 563 contributes to the L-isoleucyl-5'-AMP binding site. Residues 604 to 608 (KMSKS) carry the 'KMSKS' region motif. Lysine 607 is a binding site for ATP. Residues cysteine 907, cysteine 910, cysteine 927, and cysteine 930 each coordinate Zn(2+).

It belongs to the class-I aminoacyl-tRNA synthetase family. IleS type 1 subfamily. In terms of assembly, monomer. It depends on Zn(2+) as a cofactor.

The protein localises to the cytoplasm. It catalyses the reaction tRNA(Ile) + L-isoleucine + ATP = L-isoleucyl-tRNA(Ile) + AMP + diphosphate. Catalyzes the attachment of isoleucine to tRNA(Ile). As IleRS can inadvertently accommodate and process structurally similar amino acids such as valine, to avoid such errors it has two additional distinct tRNA(Ile)-dependent editing activities. One activity is designated as 'pretransfer' editing and involves the hydrolysis of activated Val-AMP. The other activity is designated 'posttransfer' editing and involves deacylation of mischarged Val-tRNA(Ile). In Salmonella choleraesuis (strain SC-B67), this protein is Isoleucine--tRNA ligase.